Reading from the N-terminus, the 112-residue chain is Large ribosomal subunit protein P1 (112 aa).

A compositionally biased stretch (low complexity) spans 71 to 90 (PAQAAAAAPAGGAPAAAAPA). The segment at 71-112 (PAQAAAAAPAGGAPAAAAPAESKEGRRSQGESDDDMGFGLLD) is disordered. The span at 91-100 (ESKEGRRSQG) shows a compositional bias: basic and acidic residues.

It belongs to the eukaryotic ribosomal protein P1/P2 family. As to quaternary structure, P1 and P2 exist as dimers at the large ribosomal subunit.

In terms of biological role, plays an important role in the elongation step of protein synthesis. This Oscheius tipulae protein is Large ribosomal subunit protein P1 (rpl-21).